A 33-amino-acid chain; its full sequence is Cytochrome b6-f complex subunit 8 (33 aa).

Residues 2–22 traverse the membrane as a helical segment; the sequence is LFTFAWASLAAIFTFSIAMVV.

This sequence belongs to the PetN family. The 4 large subunits of the cytochrome b6-f complex are cytochrome b6, subunit IV (17 kDa polypeptide, PetD), cytochrome f and the Rieske protein, while the 4 small subunits are PetG, PetL, PetM and PetN. The complex functions as a dimer.

The protein localises to the cellular thylakoid membrane. Functionally, component of the cytochrome b6-f complex, which mediates electron transfer between photosystem II (PSII) and photosystem I (PSI), cyclic electron flow around PSI, and state transitions. The polypeptide is Cytochrome b6-f complex subunit 8 (Prochlorococcus marinus (strain MIT 9211)).